Here is a 510-residue protein sequence, read N- to C-terminus: ATP synthase subunit alpha (510 aa).

170–177 (GDRQTGKT) lines the ATP pocket.

It belongs to the ATPase alpha/beta chains family. F-type ATPases have 2 components, CF(1) - the catalytic core - and CF(0) - the membrane proton channel. CF(1) has five subunits: alpha(3), beta(3), gamma(1), delta(1), epsilon(1). CF(0) has three main subunits: a(1), b(2) and c(9-12). The alpha and beta chains form an alternating ring which encloses part of the gamma chain. CF(1) is attached to CF(0) by a central stalk formed by the gamma and epsilon chains, while a peripheral stalk is formed by the delta and b chains.

Its subcellular location is the cell inner membrane. It catalyses the reaction ATP + H2O + 4 H(+)(in) = ADP + phosphate + 5 H(+)(out). Produces ATP from ADP in the presence of a proton gradient across the membrane. The alpha chain is a regulatory subunit. This Caulobacter vibrioides (strain ATCC 19089 / CIP 103742 / CB 15) (Caulobacter crescentus) protein is ATP synthase subunit alpha.